The following is a 410-amino-acid chain: Multifunctional CCA protein (410 aa).

2 residues coordinate ATP: Gly-8 and Arg-11. 2 residues coordinate CTP: Gly-8 and Arg-11. Mg(2+) contacts are provided by Asp-21 and Asp-23. ATP is bound by residues Arg-91, Arg-137, and Arg-140. Arg-91, Arg-137, and Arg-140 together coordinate CTP. Positions 225–326 (SGIHTLMTLQ…LNVLKKTDAF (102 aa)) constitute an HD domain.

This sequence belongs to the tRNA nucleotidyltransferase/poly(A) polymerase family. Bacterial CCA-adding enzyme type 1 subfamily. Monomer. Can also form homodimers and oligomers. It depends on Mg(2+) as a cofactor. The cofactor is Ni(2+).

It catalyses the reaction a tRNA precursor + 2 CTP + ATP = a tRNA with a 3' CCA end + 3 diphosphate. The enzyme catalyses a tRNA with a 3' CCA end + 2 CTP + ATP = a tRNA with a 3' CCACCA end + 3 diphosphate. Its function is as follows. Catalyzes the addition and repair of the essential 3'-terminal CCA sequence in tRNAs without using a nucleic acid template. Adds these three nucleotides in the order of C, C, and A to the tRNA nucleotide-73, using CTP and ATP as substrates and producing inorganic pyrophosphate. tRNA 3'-terminal CCA addition is required both for tRNA processing and repair. Also involved in tRNA surveillance by mediating tandem CCA addition to generate a CCACCA at the 3' terminus of unstable tRNAs. While stable tRNAs receive only 3'-terminal CCA, unstable tRNAs are marked with CCACCA and rapidly degraded. The chain is Multifunctional CCA protein from Neisseria gonorrhoeae (strain NCCP11945).